The sequence spans 331 residues: Transmembrane protein 59-like (331 aa).

A signal peptide spans 1-21; that stretch reads MAAVALPLLLLLASPATPTPA. The tract at residues 15 to 62 is disordered; the sequence is PATPTPARDPFSPQLGDTQRCQQRCRQRHPGLPPAQPEPEGPSESPNN. Residues 45 to 54 show a composition bias toward pro residues; that stretch reads GLPPAQPEPE. N-linked (GlcNAc...) asparagine glycosylation occurs at asparagine 90. Residues 258–278 form a helical membrane-spanning segment; the sequence is VLFCCLFLSVLIILWLSCCTL. The short motif at 329–331 is the Microbody targeting signal element; sequence TTL.

It belongs to the TMEM59 family.

The protein localises to the golgi apparatus membrane. Its function is as follows. Modulates the O-glycosylation and complex N-glycosylation steps occurring during the Golgi maturation of APP. Inhibits APP transport to the cell surface and further shedding. The sequence is that of Transmembrane protein 59-like (Tmem59l) from Rattus norvegicus (Rat).